A 349-amino-acid chain; its full sequence is tRNA pseudouridine synthase D (349 aa).

Phe27 contacts substrate. Asp80 acts as the Nucleophile in catalysis. Asn129 contributes to the substrate binding site. Positions 155–303 constitute a TRUD domain; that stretch reads GVPNYFGAQR…VEAARRAMLL (149 aa). Phe329 contacts substrate.

The protein belongs to the pseudouridine synthase TruD family.

It carries out the reaction uridine(13) in tRNA = pseudouridine(13) in tRNA. Responsible for synthesis of pseudouridine from uracil-13 in transfer RNAs. The chain is tRNA pseudouridine synthase D from Shigella dysenteriae serotype 1 (strain Sd197).